The following is an 852-amino-acid chain: Envelope glycoprotein gp160 (852 aa).

The signal sequence occupies residues 1-24 (MAHVNNYLLVTLLLISIYGYMGKN). The Extracellular segment spans residues 25 to 677 (FVTVFYGIPA…FTSWMAYIRL (653 aa)). Asparagine 37 is a glycosylation site (N-linked (GlcNAc...) asparagine; by host). A disulfide bridge connects residues cysteine 44 and cysteine 57. Residues asparagine 70, asparagine 114, asparagine 148, asparagine 195, asparagine 205, asparagine 237, asparagine 247, asparagine 270, asparagine 276, asparagine 287, and asparagine 298 are each glycosylated (N-linked (GlcNAc...) asparagine; by host). Cystine bridges form between cysteine 101/cysteine 213, cysteine 108/cysteine 204, cysteine 113/cysteine 162, and cysteine 236/cysteine 248. The segment at 113–161 (CNKTWSSASKETTTSSASLRSSTQTLLNEDSKCIQNDSCAGIGLEEMID) is V1. Residues 162–204 (CQFKMTGLKRDESKQYKDTWYKQDLVCEKGTRSNESKCYIKTC) are V2. Positions 303-335 (CKRPGNKMVVPIRTVSGILFHSQPINKRPKQAW) are V3. Residues cysteine 303 and cysteine 336 are joined by a disulfide bond. Residues asparagine 341, asparagine 364, asparagine 396, asparagine 406, asparagine 445, asparagine 461, and asparagine 464 are each glycosylated (N-linked (GlcNAc...) asparagine; by host). 2 disulfides stabilise this stretch: cysteine 388–cysteine 444 and cysteine 395–cysteine 417. The tract at residues 395–417 (CNMTFFLNWVENRTGLKRNYASC) is V4. Residues 461–467 (NLTNITV) form a V5 region. The tract at residues 510–530 (GVLVLGFLGFLATAGSAMGAA) is fusion peptide. Residues 573–589 (LQARVTAIEKYLKDQAQ) form an immunosuppression region. N-linked (GlcNAc...) asparagine; by host glycosylation is found at asparagine 609, asparagine 618, and asparagine 634. Residues 622-648 (QQWERQVRFLDANITKLLEEAQIQQEK) are a coiled coil. The segment at 655-676 (KLNQWDIFSNWFDFTSWMAYIR) is MPER; binding to GalCer. A helical membrane pass occupies residues 678-698 (GLYIVIGIVVLRIAIYIIQML). Topologically, residues 699 to 852 (ARLRKGYRPV…IRQGAELALL (154 aa)) are cytoplasmic. The YXXV motif; contains endocytosis signal signature appears at 705 to 708 (YRPV). Positions 713–740 (PSYTQQIPIRKDRGQPANEETEEGGGNN) are disordered. A lipid anchor (S-palmitoyl cysteine; by host) is attached at cysteine 771. A Di-leucine internalization motif motif is present at residues 851–852 (LL).

In terms of assembly, the mature envelope protein (Env) consists of a homotrimer of non-covalently associated gp120-gp41 heterodimers. The resulting complex protrudes from the virus surface as a spike. There seems to be as few as 10 spikes on the average virion. Interacts with human CD4, CCR5 and CXCR4, to form a P4HB/PDI-CD4-CXCR4-gp120 complex. Gp120 also interacts with the C-type lectins CD209/DC-SIGN and CLEC4M/DC-SIGNR (collectively referred to as DC-SIGN(R)). Gp120 and gp41 interact with GalCer. The mature envelope protein (Env) consists of a homotrimer of non-covalently associated gp120-gp41 heterodimers. The resulting complex protrudes from the virus surface as a spike. There seems to be as few as 10 spikes on the average virion. In terms of processing, specific enzymatic cleavages in vivo yield mature proteins. Envelope glycoproteins are synthesized as an inactive precursor that is heavily N-glycosylated and processed likely by host cell furin in the Golgi to yield the mature SU and TM proteins. The cleavage site between SU and TM requires the minimal sequence [KR]-X-[KR]-R. Post-translationally, palmitoylation of the transmembrane protein and of Env polyprotein (prior to its proteolytic cleavage) is essential for their association with host cell membrane lipid rafts. Palmitoylation is therefore required for envelope trafficking to classical lipid rafts, but not for viral replication.

It localises to the virion membrane. The protein resides in the host cell membrane. It is found in the host endosome membrane. Functionally, the surface protein gp120 (SU) attaches the virus to the host lymphoid cell by binding to the primary receptor CD4. This interaction induces a structural rearrangement creating a high affinity binding site for a chemokine coreceptor like CXCR4 and/or CCR5. This peculiar 2 stage receptor-interaction strategy allows gp120 to maintain the highly conserved coreceptor-binding site in a cryptic conformation, protected from neutralizing antibodies. Since CD4 also displays a binding site for the disulfide-isomerase P4HB/PDI, a P4HB/PDI-CD4-CXCR4-gp120 complex may form. In that complex, P4HB/PDI could reach and reduce gp120 disulfide bonds, causing major conformational changes in gp120. TXN, another PDI family member could also be involved in disulfide rearrangements in Env during fusion. These changes are transmitted to the transmembrane protein gp41 and are thought to activate its fusogenic potential by unmasking its fusion peptide. Its function is as follows. The surface protein gp120 is a ligand for CD209/DC-SIGN and CLEC4M/DC-SIGNR, which are respectively found on dendritic cells (DCs), and on endothelial cells of liver sinusoids and lymph node sinuses. These interactions allow capture of viral particles at mucosal surfaces by these cells and subsequent transmission to permissive cells. DCs are professional antigen presenting cells, critical for host immunity by inducing specific immune responses against a broad variety of pathogens. They act as sentinels in various tissues where they take up antigen, process it, and present it to T-cells following migration to lymphoid organs. HIV subverts the migration properties of dendritic cells to gain access to CD4+ T-cells in lymph nodes. Virus transmission to permissive T-cells occurs either in trans (without DCs infection, through viral capture and transmission), or in cis (following DCs productive infection, through the usual CD4-gp120 interaction), thereby inducing a robust infection. In trans infection, bound virions remain infectious over days and it is proposed that they are not degraded, but protected in non-lysosomal acidic organelles within the DCs close to the cell membrane thus contributing to the viral infectious potential during DCs' migration from the periphery to the lymphoid tissues. On arrival at lymphoid tissues, intact virions recycle back to DCs' cell surface allowing virus transmission to CD4+ T-cells. Virion capture also seems to lead to MHC-II-restricted viral antigen presentation, and probably to the activation of HIV-specific CD4+ cells. In terms of biological role, the transmembrane protein gp41 (TM) acts as a class I viral fusion protein. Under the current model, the protein has at least 3 conformational states: pre-fusion native state, pre-hairpin intermediate state, and post-fusion hairpin state. During fusion of viral and target intracellular membranes, the coiled coil regions (heptad repeats) assume a trimer-of-hairpins structure, positioning the fusion peptide in close proximity to the C-terminal region of the ectodomain. The formation of this structure appears to drive apposition and subsequent fusion of viral and target cell membranes. Complete fusion occurs in host cell endosomes and is dynamin-dependent, however some lipid transfer might occur at the plasma membrane. The virus undergoes clathrin-dependent internalization long before endosomal fusion, thus minimizing the surface exposure of conserved viral epitopes during fusion and reducing the efficacy of inhibitors targeting these epitopes. Membranes fusion leads to delivery of the nucleocapsid into the cytoplasm. The envelope glycoprotein gp160 precursor down-modulates cell surface CD4 antigen by interacting with it in the endoplasmic reticulum and blocking its transport to the cell surface. Functionally, the gp120-gp41 heterodimer seems to contribute to T-cell depletion during HIV-1 infection. The envelope glycoproteins expressed on the surface of infected cells induce apoptosis through an interaction with uninfected cells expressing the receptor (CD4) and the coreceptors CXCR4 or CCR5. This type of bystander killing may be obtained by at least three distinct mechanisms. First, the interaction between the 2 cells can induce cellular fusion followed by nuclear fusion within the syncytium. Syncytia are condemned to die from apoptosis. Second, the 2 interacting cells may not fuse entirely and simply exchange plasma membrane lipids, after a sort of hemifusion process, followed by rapid death. Third, it is possible that virus-infected cells, on the point of undergoing apoptosis, fuse with CD4-expressing cells, in which case apoptosis is rapidly transmitted from one cell to the other and thus occurs in a sort of contagious fashion. Its function is as follows. The gp120-gp41 heterodimer allows rapid transcytosis of the virus through CD4 negative cells such as simple epithelial monolayers of the intestinal, rectal and endocervical epithelial barriers. Both gp120 and gp41 specifically recognize glycosphingolipids galactosyl-ceramide (GalCer) or 3' sulfo-galactosyl-ceramide (GalS) present in the lipid rafts structures of epithelial cells. Binding to these alternative receptors allows the rapid transcytosis of the virus through the epithelial cells. This transcytotic vesicle-mediated transport of virions from the apical side to the basolateral side of the epithelial cells does not involve infection of the cells themselves. The chain is Envelope glycoprotein gp160 (env) from Human immunodeficiency virus type 2 subtype B (isolate EHO) (HIV-2).